The primary structure comprises 474 residues: Glycogen synthase (474 aa).

Position 15 (K15) interacts with ADP-alpha-D-glucose.

It belongs to the glycosyltransferase 1 family. Bacterial/plant glycogen synthase subfamily.

It catalyses the reaction [(1-&gt;4)-alpha-D-glucosyl](n) + ADP-alpha-D-glucose = [(1-&gt;4)-alpha-D-glucosyl](n+1) + ADP + H(+). It functions in the pathway glycan biosynthesis; glycogen biosynthesis. In terms of biological role, synthesizes alpha-1,4-glucan chains using ADP-glucose. This is Glycogen synthase from Chlamydia muridarum (strain MoPn / Nigg).